The chain runs to 89 residues: Small ribosomal subunit protein bS20 (89 aa).

Belongs to the bacterial ribosomal protein bS20 family.

Binds directly to 16S ribosomal RNA. The protein is Small ribosomal subunit protein bS20 of Wolbachia pipientis wMel.